Here is a 132-residue protein sequence, read N- to C-terminus: Small ribosomal subunit protein uS8 (132 aa).

The protein belongs to the universal ribosomal protein uS8 family. Part of the 30S ribosomal subunit. Contacts proteins S5 and S12.

In terms of biological role, one of the primary rRNA binding proteins, it binds directly to 16S rRNA central domain where it helps coordinate assembly of the platform of the 30S subunit. This Rhodopseudomonas palustris (strain BisA53) protein is Small ribosomal subunit protein uS8.